The primary structure comprises 633 residues: ATP-dependent clpX-like chaperone, mitochondrial (633 aa).

A mitochondrion-targeting transit peptide spans 1 to 56 (MPSCGACTCGAAAVRLITSSLASAQRGISGGRIHMSVLGRLGTFETQILQRAPLRS). The interval 68–100 (DGISKDGSGDGNKKSASEGSSKKSGSGNSGKGG) is disordered. Residues 69–83 (GISKDGSGDGNKKSA) show a composition bias toward basic and acidic residues. The span at 84–93 (SEGSSKKSGS) shows a compositional bias: low complexity. The ClpX-type ZB domain maps to 93 to 146 (SGNSGKGGNQLRCPKCGDLCTHVETFVSSTRFVKCEKCHHFFVVLSEADSKKSI). The Zn(2+) site is built by C105, C108, C127, and C130. Residue 294–301 (PTGSGKTL) coordinates ATP. K437 bears the N6-acetyllysine mark. A compositionally biased stretch (basic and acidic residues) spans 598-610 (KEPGYIRAPTKES). Residues 598–633 (KEPGYIRAPTKESSEEEYDSGVEEEGWPRQADAANS) are disordered. Residues 611–622 (SEEEYDSGVEEE) are compositionally biased toward acidic residues. S617 is modified (phosphoserine).

This sequence belongs to the ClpX chaperone family. As to quaternary structure, homohexamer that forms a ring structure; this hexamerization requires ATP binding. Component of the ClpXP complex formed by the assembly of two CLPP heptameric rings with two CLPX hexameric rings, giving rise to a symmetrical structure with two central CLPP rings flanked by a CLPX ring at either end of the complex. Interacts with TFAM. As to expression, higher expression in skeletal muscle and heart and to a lesser extent in liver, brain, placenta, lung, kidney and pancreas.

It is found in the mitochondrion. The protein localises to the mitochondrion matrix. It localises to the mitochondrion nucleoid. It catalyses the reaction ATP + H2O = ADP + phosphate + H(+). ATP-dependent chaperone that functions as an unfoldase. As part of the ClpXP protease complex, it recognizes specific protein substrates, unfolds them using energy derived from ATP hydrolysis, and then translocates them to the proteolytic subunit (CLPP) of the ClpXP complex for degradation. Thanks to its chaperone activity, it also functions in the incorporation of the pyridoxal phosphate cofactor into 5-aminolevulinate synthase, thereby activating 5-aminolevulinate (ALA) synthesis, the first step in heme biosynthesis. This chaperone is also involved in the control of mtDNA nucleoid distribution, by regulating mitochondrial transcription factor A (TFAM) activity. The chain is ATP-dependent clpX-like chaperone, mitochondrial from Homo sapiens (Human).